A 401-amino-acid polypeptide reads, in one-letter code: Probable 2,3-bisphosphoglycerate-independent phosphoglycerate mutase (401 aa).

The protein belongs to the BPG-independent phosphoglycerate mutase family. A-PGAM subfamily.

It catalyses the reaction (2R)-2-phosphoglycerate = (2R)-3-phosphoglycerate. It participates in carbohydrate degradation; glycolysis; pyruvate from D-glyceraldehyde 3-phosphate: step 3/5. Functionally, catalyzes the interconversion of 2-phosphoglycerate and 3-phosphoglycerate. This Thermotoga petrophila (strain ATCC BAA-488 / DSM 13995 / JCM 10881 / RKU-1) protein is Probable 2,3-bisphosphoglycerate-independent phosphoglycerate mutase.